Here is a 62-residue protein sequence, read N- to C-terminus: UPF0291 protein CLK_1994 (62 aa).

The protein belongs to the UPF0291 family.

The protein localises to the cytoplasm. This is UPF0291 protein CLK_1994 from Clostridium botulinum (strain Loch Maree / Type A3).